The chain runs to 237 residues: Tetraspanin-8 (237 aa).

At 1–9 the chain is on the cytoplasmic side; the sequence is MAGVSACIK. Residues 10-33 form a helical membrane-spanning segment; it reads YSMFTFNFLFWLCGILILALAIWV. Topologically, residues 34–57 are extracellular; sequence RVSNDSQAIFGSEDVGSSSYVAVD. The chain crosses the membrane as a helical span at residues 58–72; that stretch reads ILIAVGAIIMILGFL. Over 73–83 the chain is Cytoplasmic; sequence GCCGAIKESRC. A helical transmembrane segment spans residues 84–109; that stretch reads MLLLFFIGLLLILLLQVATGILGAVF. At 110 to 205 the chain is on the extracellular side; it reads KSKSDRIVNE…SFIKDFLAKN (96 aa). N-linked (GlcNAc...) asparagine glycosylation occurs at asparagine 118. A helical transmembrane segment spans residues 206–230; that stretch reads LIIVIGISFGLAVIEILGLVFSMVL. Residues 231–237 lie on the Cytoplasmic side of the membrane; that stretch reads YCQIGNK.

This sequence belongs to the tetraspanin (TM4SF) family. In terms of assembly, forms homooligomers. Interacts with MEP1B. Interacts with integrin alpha3/ITGA3. Interacts with RICTOR and MTOR. Interacts with ADAM17. Interacts with ECE1. As to expression, gastric, colon, rectal, and pancreatic carcinomas.

Its subcellular location is the cell membrane. Structural component of specialized membrane microdomains known as tetraspanin-enriched microdomains (TERMs), which act as platforms for receptor clustering and signaling. Participates thereby in diverse biological functions such as cell signal transduction, migration and protein trafficking. Promotes ADAM17-mediated TNF-alpha processing through recruitment of ADAM17 to tetraspanin-enriched micro-domains (TEMs). Forms a complex with RICTOR and integrin alpha3/ITGA3 to mediate mTORC2 activation and AKT1 phosphorylation leading to cell migration. Reduces apoptosis and autophagy induced by high glucose levels through forming a complex with mTOR and RICTOR. Contributes to the maintenance of intestinal epithelial barrier and plays a role in the regulation of intestine inflammation by switching interferon gamma receptor 1/IFNGR1 from clathrin-dependent to lipid raft-dependent endocytosis route to limit STAT1 activation magnitude and duration. Acts as a modulator of the endothelin axis by associating with endothelin converting enzyme ECE1 and regulating its activity of conversion of the endothelin-1 precursor to endothelin. The protein is Tetraspanin-8 (TSPAN8) of Homo sapiens (Human).